The primary structure comprises 63 residues: ATP synthase membrane subunit K, mitochondrial (63 aa).

The chain crosses the membrane as a helical span at residues 15 to 37 (TMRGRANVAKATWASLGLVYVLV).

In terms of assembly, F-type ATPases have 2 components, CF(1) - the catalytic core - and CF(0) - the membrane proton channel. CF(1) has five subunits: alpha(3), beta(3), gamma(1), delta(1), epsilon(1). CF(0) has three main subunits: a, b and c. The ATP synthase complex/complex V exists as a monomeric and a dimeric supercomplex that helps shape mitochondrial cristae to optimize proton flow.

The protein localises to the mitochondrion membrane. Functionally, mitochondrial membrane ATP synthase (F(1)F(0) ATP synthase or Complex V) produces ATP from ADP in the presence of a proton gradient across the membrane which is generated by electron transport complexes of the respiratory chain. F-type ATPases consist of two structural domains, F(1) - containing the extramembraneous catalytic core and F(0) - containing the membrane proton channel, linked together by a central stalk and a peripheral stalk. During catalysis, ATP synthesis in the catalytic domain of F(1) is coupled via a rotary mechanism of the central stalk subunits to proton translocation. ATP5MK is a minor subunit of the mitochondrial membrane ATP synthase required for dimerization of the ATP synthase complex and as such regulates ATP synthesis in the mitochondria. In Drosophila melanogaster (Fruit fly), this protein is ATP synthase membrane subunit K, mitochondrial.